The primary structure comprises 147 residues: Heavy metal-dependent transcription regulator 1 (147 aa).

Residues 1 to 70 (MNIGQASKVV…VEQIKDLLAL (70 aa)) enclose the HTH merR-type domain. A DNA-binding region (H-T-H motif) is located at residues 3–22 (IGQASKVVSGVSSKMIRYYE).

It is found in the cytoplasm. In terms of biological role, transcriptional regulator involved in acid tolerance. Binds copper. This Rhizobium meliloti (strain 1021) (Ensifer meliloti) protein is Heavy metal-dependent transcription regulator 1 (hmrR1).